The primary structure comprises 188 residues: dCTP deaminase (188 aa).

DCTP contacts are provided by residues 111 to 116 (KSTYAR), 135 to 137 (TLE), Gln156, Tyr170, and Gln180. The active-site Proton donor/acceptor is the Glu137.

This sequence belongs to the dCTP deaminase family. In terms of assembly, homotrimer.

It carries out the reaction dCTP + H2O + H(+) = dUTP + NH4(+). It functions in the pathway pyrimidine metabolism; dUMP biosynthesis; dUMP from dCTP (dUTP route): step 1/2. Functionally, catalyzes the deamination of dCTP to dUTP. This is dCTP deaminase from Pseudomonas syringae pv. tomato (strain ATCC BAA-871 / DC3000).